We begin with the raw amino-acid sequence, 349 residues long: KH domain-containing, RNA-binding, signal transduction-associated protein 2 (349 aa).

Residues 65-135 (LIPVKQYPKF…HLSDELHVLI (71 aa)) enclose the KH domain. 2 disordered regions span residues 181 to 263 (SEES…PPPA) and 320 to 349 (EEWTTTRSSLKAPPPRSARGGYREHPYGRY). Over residues 218 to 231 (RGVLTPRGTTVTRG) the composition is skewed to low complexity. Omega-N-methylarginine is present on residues R230 and R240. Residues 340 to 349 (GYREHPYGRY) are compositionally biased toward basic and acidic residues.

This sequence belongs to the KHDRBS family. In terms of assembly, self-associates to form homooligomers. Interacts with SAFB, SFRS9 and YTHDC1. Found in a complex with KHDRBS1, KHDRBS2 and KHDRBS3. Interacts with RBMX. Interacts with the SH3 domains of FYN and PLCG1. Interacts with the SH2 domains of FYN, GRAP2, PLCG1 and RASA1. Interacts with RBMX. Methylated. In terms of processing, phosphorylated on tyrosine residues by FYN. Tyrosine phosphorylated by PTK6 and SRC. Tyrosine phosphorylated by SRC during mitosis. As to expression, expressed in the cortex, cerebellum, striatum, midbrain, brainstem and thalamus of the brain (at protein level). Expressed in neurons (at protein level). Expressed in brain and testis. Expressed in the dentate gyrus of the hippocampus.

Its subcellular location is the nucleus. Its function is as follows. RNA-binding protein that plays a role in the regulation of alternative splicing and influences mRNA splice site selection and exon inclusion. Its phosphorylation by FYN inhibits its ability to regulate splice site selection. Induces an increased concentration-dependent incorporation of exon in CD44 pre-mRNA by direct binding to purine-rich exonic enhancer. May function as an adapter protein for Src kinases during mitosis. Binds both poly(A) and poly(U) homopolymers. Phosphorylation by PTK6 inhibits its RNA-binding ability. In Rattus norvegicus (Rat), this protein is KH domain-containing, RNA-binding, signal transduction-associated protein 2 (Khdrbs2).